Consider the following 167-residue polypeptide: Large ribosomal subunit protein bL9 (167 aa).

It belongs to the bacterial ribosomal protein bL9 family.

In terms of biological role, binds to the 23S rRNA. This Nitratidesulfovibrio vulgaris (strain ATCC 29579 / DSM 644 / CCUG 34227 / NCIMB 8303 / VKM B-1760 / Hildenborough) (Desulfovibrio vulgaris) protein is Large ribosomal subunit protein bL9.